The following is a 467-amino-acid chain: Neutral protease 2 homolog NFIA_031120 (467 aa).

The signal sequence occupies residues 1 to 19 (MKITALASAILAVVHGALA). A propeptide spanning residues 20 to 172 (LPARAPALDI…PASIKPLDRR (153 aa)) is cleaved from the precursor. Intrachain disulfides connect C179-C251 and C258-C276. H300 lines the Zn(2+) pocket. E301 is an active-site residue. 2 residues coordinate Zn(2+): H304 and D315. A compositionally biased stretch (polar residues) spans 359–451 (WDGNSQPGQT…TMWDGSSEPG (93 aa)). The disordered stretch occupies residues 359-467 (WDGNSQPGQT…HTTWGNFYQA (109 aa)).

This sequence belongs to the peptidase M35 family. It depends on Zn(2+) as a cofactor.

The protein resides in the secreted. It catalyses the reaction Preferential cleavage of bonds with hydrophobic residues in P1'. Also 3-Asn-|-Gln-4 and 8-Gly-|-Ser-9 bonds in insulin B chain.. Secreted metalloproteinase that allows assimilation of proteinaceous substrates. Shows high activities on basic nuclear substrates such as histone and protamine. The chain is Neutral protease 2 homolog NFIA_031120 from Neosartorya fischeri (strain ATCC 1020 / DSM 3700 / CBS 544.65 / FGSC A1164 / JCM 1740 / NRRL 181 / WB 181) (Aspergillus fischerianus).